Consider the following 533-residue polypeptide: DNA-directed RNA polymerase III subunit RPC3 (533 aa).

S194 carries the post-translational modification Phosphoserine. A disordered region spans residues 197–230 (GKGKRRRSSDEDATGEPKAKRPKQTTDNKEPIPD). Basic and acidic residues predominate over residues 211–228 (GEPKAKRPKQTTDNKEPI).

Belongs to the eukaryotic RPC3/POLR3C RNA polymerase subunit family. In terms of assembly, component of the RNA polymerase III complex consisting of 17 subunits: a ten-subunit horseshoe-shaped catalytic core composed of POLR3A/RPC1, POLR3B/RPC2, POLR1C/RPAC1, POLR1D/RPAC2, POLR3K/RPC10, POLR2E/RPABC1, POLR2F/RPABC2, POLR2H/RPABC3, POLR2K/RPABC4 and POLR2L/RPABC5; a mobile stalk composed of two subunits POLR3H/RPC8 and CRCP/RPC9, protruding from the core and functioning primarily in transcription initiation; and additional subunits homologous to general transcription factors of the RNA polymerase II machinery, POLR3C/RPC3-POLR3F/RPC6-POLR3G/RPC7 heterotrimer required for transcription initiation and POLR3D/RPC4-POLR3E/RPC5 heterodimer involved in both transcription initiation and termination. Directly interacts with POLR3G/RPC7 and POLR3GL. Directly interacts with POLR3F/RPC6. Interacts with GTF3C4. As part of the RNA polymerase III complex, interacts with PKP2.

The protein localises to the nucleus. Functionally, DNA-dependent RNA polymerase catalyzes the transcription of DNA into RNA using the four ribonucleoside triphosphates as substrates. Specific peripheric component of RNA polymerase III (Pol III) which synthesizes small non-coding RNAs including 5S rRNA, snRNAs, tRNAs and miRNAs from at least 500 distinct genomic loci. Part of POLR3C/RPC3-POLR3F/RPC6-POLR3G/RPC7 heterotrimer, coordinates the dynamics of Pol III stalk and clamp modules during the transition from apo to elongation state. Pol III plays a key role in sensing and limiting infection by intracellular bacteria and DNA viruses. Acts as a nuclear and cytosolic DNA sensor involved in innate immune response. Can sense non-self dsDNA that serves as template for transcription into dsRNA. The non-self RNA polymerase III transcripts, such as Epstein-Barr virus-encoded RNAs (EBERs) induce type I interferon and NF-kappa-B through the RIG-I pathway. Preferentially binds single-stranded DNA (ssDNA) in a sequence-independent manner. The polypeptide is DNA-directed RNA polymerase III subunit RPC3 (POLR3C) (Bos taurus (Bovine)).